Reading from the N-terminus, the 433-residue chain is 23S rRNA (uracil(1939)-C(5))-methyltransferase RlmD (433 aa).

A TRAM domain is found at 10 to 68 (RTTTRQIITVSVNDLDSFGQGVARHNGKTLFIPGLLPQENAEVTVTEDKKQYARAKVVR). 4 residues coordinate [4Fe-4S] cluster: C81, C87, C90, and C162. S-adenosyl-L-methionine-binding residues include Q265, F294, N299, E315, N342, and D363. C389 (nucleophile) is an active-site residue.

Belongs to the class I-like SAM-binding methyltransferase superfamily. RNA M5U methyltransferase family. RlmD subfamily.

It carries out the reaction uridine(1939) in 23S rRNA + S-adenosyl-L-methionine = 5-methyluridine(1939) in 23S rRNA + S-adenosyl-L-homocysteine + H(+). Its function is as follows. Catalyzes the formation of 5-methyl-uridine at position 1939 (m5U1939) in 23S rRNA. This chain is 23S rRNA (uracil(1939)-C(5))-methyltransferase RlmD, found in Shigella boydii serotype 4 (strain Sb227).